Consider the following 111-residue polypeptide: uncharacterized protein (111 aa).

The segment at 1–26 (MDLKDGVEEEEGAGENGKGGTHAQRV) is disordered.

This is an uncharacterized protein from Caenorhabditis elegans.